Reading from the N-terminus, the 197-residue chain is CASP-like protein 1B2 (197 aa).

A2 bears the N-acetylalanine mark. At 2–17 (AREKIVVAGGTTKSWK) the chain is on the cytoplasmic side. A helical transmembrane segment spans residues 18–38 (LLLGLRIFAFMATLAAAIVMS). Residues 39–69 (LNKETKTLVVATIGTVPIKATLTAKFQHTPA) are Extracellular-facing. The chain crosses the membrane as a helical span at residues 70–90 (FVFFVIANVMVSFHNLLMIVV). Topologically, residues 91–106 (QIFSRKLEYKGLRLLS) are cytoplasmic. Residues 107-127 (IAILDMLNATLVSAAANAAVF) form a helical membrane-spanning segment. The Extracellular segment spans residues 128-156 (VAELGKNGNKHAKWNKVCDRFTTYCDHGA). Residues 157 to 177 (GAIIAAFAGVILMLLVSAVSI) traverse the membrane as a helical segment. Residues 178 to 197 (SRLLINSKNFSTTATTTSVV) lie on the Cytoplasmic side of the membrane.

This sequence belongs to the Casparian strip membrane proteins (CASP) family. Homodimer and heterodimers.

It is found in the cell membrane. The chain is CASP-like protein 1B2 from Arabidopsis thaliana (Mouse-ear cress).